A 538-amino-acid chain; its full sequence is Beta-1,4-mannosyl-glycoprotein 4-beta-N-acetylglucosaminyltransferase (538 aa).

Over methionine 1–lysine 7 the chain is Cytoplasmic. A helical; Signal-anchor for type II membrane protein transmembrane segment spans residues leucine 8–leucine 23. Residues histidine 24–glycine 538 are Lumenal-facing. The interval glycine 121 to arginine 151 is disordered. 3 N-linked (GlcNAc...) asparagine glycosylation sites follow: asparagine 245, asparagine 263, and asparagine 401. The disordered stretch occupies residues proline 509–glycine 538.

It belongs to the glycosyltransferase 17 family. As to quaternary structure, interacts with MGAT4D.

It is found in the golgi apparatus membrane. It carries out the reaction N(4)-{beta-D-GlcNAc-(1-&gt;2)-alpha-D-Man-(1-&gt;3)-[beta-D-GlcNAc-(1-&gt;2)-alpha-D-Man-(1-&gt;6)]-beta-D-Man-(1-&gt;4)-beta-D-GlcNAc-(1-&gt;4)-beta-D-GlcNAc}-L-asparaginyl-[protein] + UDP-N-acetyl-alpha-D-glucosamine = N(4)-{beta-D-GlcNAc-(1-&gt;2)-alpha-D-Man-(1-&gt;3)-[beta-D-GlcNAc-(1-&gt;4)]-[beta-D-GlcNAc-(1-&gt;2)-alpha-D-Man-(1-&gt;6)]-beta-D-Man-(1-&gt;4)-beta-D-GlcNAc-(1-&gt;4)-beta-D-GlcNAc}-L-asparaginyl-[protein] + UDP + H(+). It participates in protein modification; protein glycosylation. In terms of biological role, it is involved in the regulation of the biosynthesis and biological function of glycoprotein oligosaccharides. Catalyzes the addition of N-acetylglucosamine in beta 1-4 linkage to the beta-linked mannose of the trimannosyl core of N-linked sugar chains, called bisecting N-acetylglucosamine (GlcNAc). It is one of the most important enzymes involved in the regulation of the biosynthesis of glycoprotein oligosaccharides. The addition of this bisecting GlcNAc residue alters not only the composition, but also the conformation of the N-glycan. The introduction of the bisecting GlcNAc residue results in the suppression of further processing and elongation of N-glycans, precluding the formation of beta-1,6 GlcNAc branching, catalyzed by MGAT5 since it is unable to use the bisected oligosaccharide as a substrate. Addition of bisecting N-acetylglucosamine to CDH1/E-cadherin modulates CDH1 cell membrane location. Inhibits NeuAc-alpha-2,3-Gal-beta-1,4-GlcNAc- formation which modulates sialylation levels and plays a role in cell migration regulation. In brain, addition of bisecting N-acetylglucosamine to BACE1 blocks its lysosomal targeting in response to oxidative stress and further degradation which increases its location to early endosome and the APP cleavage. The protein is Beta-1,4-mannosyl-glycoprotein 4-beta-N-acetylglucosaminyltransferase (Mgat3) of Rattus norvegicus (Rat).